The chain runs to 88 residues: Small ribosomal subunit protein bS18 (88 aa).

It belongs to the bacterial ribosomal protein bS18 family. In terms of assembly, part of the 30S ribosomal subunit. Forms a tight heterodimer with protein bS6.

Binds as a heterodimer with protein bS6 to the central domain of the 16S rRNA, where it helps stabilize the platform of the 30S subunit. The protein is Small ribosomal subunit protein bS18 of Aliarcobacter butzleri (strain RM4018) (Arcobacter butzleri).